Here is a 357-residue protein sequence, read N- to C-terminus: Ketoreductase CTB6 (357 aa).

Residue Tyr172 coordinates NADP(+).

The protein belongs to the NAD(P)-dependent epimerase/dehydratase family. Dihydroflavonol-4-reductase subfamily.

It functions in the pathway mycotoxin biosynthesis. Ketoreductase; part of the gene cluster that mediates the biosynthesis of cercosporin, a light-activated, non-host-selective toxin. The perylenequinone chromophore of cercosporin absorbs light energy to attain an electronically-activated triplet state and produces active oxygen species such as the hydroxyl radical, superoxide, hydrogen peroxide or singlet oxygen upon reaction with oxygen molecules. These reactive oxygen species cause damage to various cellular components including lipids, proteins and nucleic acids. The first step of cercosporin biosynthesis is performed by the polyketide synthase CTB1 which catalyzes the formation of nor-toralactone. The starter unit acyltransferase (SAT) domain of CTB1 initiates polyketide extension by the selective utilization of acetyl-CoA, which is elongated to the heptaketide in the beta-ketoacyl synthase (KS) domain by successive condensations with six malonyl units introduced by the malonyl acyltransferase (MAT) domain. The product template (PT) domain catalyzes C4-C9 and C2-C11 aldol cyclizations and dehydrations to a trihydroxynaphthalene, which is thought to be delivered to the thioesterase (TE) domain for product release. The bifunctional enzyme CTB3 then methylates nor-toralactone to toralactone before conducting an unusual oxidative aromatic ring opening. The O-methyltransferase CTB2 further methylates the nascent OH-6 of the CBT3 product, blocking further oxidation at this site before the reductase CTB6 reduces the 2-oxopropyl ketone at position C7, giving naphthalene. The FAD-dependent monooxygenase CTB5 in concert with the multicopper oxidase CTB12 are responsible for homodimerization of naphthalene with CTB7 installing the dioxepine moiety, finally producing cercosporin. The fasciclin domain-containing protein CTB11 might act with CTB5 and CTB12 whereas the roles of CTB9 and CTB10 have still to be elucidated. The polypeptide is Ketoreductase CTB6 (Cercospora beticola (Sugarbeet leaf spot fungus)).